The following is a 105-amino-acid chain: MSNTTWGLQRDITPRLGARLVQEGNQLHYLADRASITGKFSDAECPKLDVVFPHFISQIESMLTTGELNPRHAQCVTLYHNGFTCEADTLGSCGYVYIAVYPTQR.

Belongs to the CbeA/YafW/YfjZ antitoxin family.

Its function is as follows. Antitoxin component of a type IV toxin-antitoxin (TA) system. Antitoxin that counteracts the effect of cognate toxin YpjF. Also counteracts the effect of non-cognate toxins CbtA and YfkI. This chain is Antitoxin YfjZ (yfjZ), found in Escherichia coli (strain K12).